The chain runs to 503 residues: Cytochrome P450 6l1 (503 aa).

Residue Cys438 participates in heme binding.

This sequence belongs to the cytochrome P450 family. The cofactor is heme. Detected only in testes and accessory glands of male adults.

It localises to the endoplasmic reticulum membrane. The protein resides in the microsome membrane. The sequence is that of Cytochrome P450 6l1 (CYP6L1) from Blattella germanica (German cockroach).